The chain runs to 196 residues: Endonuclease V (196 aa).

The Mg(2+) site is built by Asp-37 and Asp-98.

This sequence belongs to the endonuclease V family. Mg(2+) serves as cofactor.

The protein resides in the cytoplasm. It catalyses the reaction Endonucleolytic cleavage at apurinic or apyrimidinic sites to products with a 5'-phosphate.. Its function is as follows. DNA repair enzyme involved in the repair of deaminated bases. Selectively cleaves double-stranded DNA at the second phosphodiester bond 3' to a deoxyinosine leaving behind the intact lesion on the nicked DNA. This Sulfurisphaera tokodaii (strain DSM 16993 / JCM 10545 / NBRC 100140 / 7) (Sulfolobus tokodaii) protein is Endonuclease V.